The following is a 443-amino-acid chain: Probable nitrate/nitrite antiporter NarK2 (443 aa).

Transmembrane regions (helical) follow at residues I32 to V52, L66 to F86, H95 to V115, W123 to M143, I172 to G192, N210 to L230, S256 to I276, Y292 to D312, L314 to V334, F346 to S366, V383 to A403, and T409 to L429.

This sequence belongs to the major facilitator superfamily. Nitrate/nitrite porter (TC 2.A.1.8) family.

The protein resides in the cell membrane. The catalysed reaction is nitrate(in) + nitrite(out) = nitrate(out) + nitrite(in). Probable nitrate/nitrite antiporter that may be involved in nitrate import and nitrite export during anaerobic growth. The sequence is that of Probable nitrate/nitrite antiporter NarK2 from Thermus thermophilus.